A 383-amino-acid polypeptide reads, in one-letter code: UPF0425 pyridoxal phosphate-dependent protein Msp_0916 (383 aa).

Residue Lys-207 is modified to N6-(pyridoxal phosphate)lysine.

The protein belongs to the UPF0425 family. The cofactor is pyridoxal 5'-phosphate.

The sequence is that of UPF0425 pyridoxal phosphate-dependent protein Msp_0916 from Methanosphaera stadtmanae (strain ATCC 43021 / DSM 3091 / JCM 11832 / MCB-3).